Here is a 200-residue protein sequence, read N- to C-terminus: Urease accessory protein UreG (200 aa).

Residue 8 to 15 coordinates GTP; sequence GPVGSGKT.

Belongs to the SIMIBI class G3E GTPase family. UreG subfamily. Homodimer. UreH, UreF and UreG form a complex that acts as a GTP-hydrolysis-dependent molecular chaperone, activating the urease apoprotein by helping to assemble the nickel containing metallocenter of UreC. The UreE protein probably delivers the nickel.

It is found in the cytoplasm. Its function is as follows. Facilitates the functional incorporation of the urease nickel metallocenter. This process requires GTP hydrolysis, probably effectuated by UreG. The chain is Urease accessory protein UreG from Helicobacter hepaticus (strain ATCC 51449 / 3B1).